A 109-amino-acid chain; its full sequence is EPIDERMAL PATTERNING FACTOR-like protein 4 (109 aa).

The first 26 residues, 1-26 (MGTFRRRRRFLLAALVTFALLHLFSA), serve as a signal peptide directing secretion. 3 cysteine pairs are disulfide-bonded: C66/C100, C70/C76, and C73/C102.

It belongs to the plant cysteine rich small secretory peptide family. Epidermal patterning factor subfamily. As to quaternary structure, interacts with ERECTA. In terms of tissue distribution, expressed at the base of the apical meristem at 3 days after germination. Not detected in the hypocotyl. Expressed in developing stems soon after bolting, in inflorescence stems and in young siliques.

It localises to the secreted. Acts primarily as positive regulator of inflorescence growth. Endodermal expression is sufficient for proper inflorescence architecture. Redundantly involved with EPFL6 in procambial development regulation. Controls stomatal patterning. Mediates stomatal development inhibition. TMM (AC Q9SSD1) functions to dampen or block CLL2 signaling. Acts as a growth-regulatory ligand for ERECTA family receptors. The protein is EPIDERMAL PATTERNING FACTOR-like protein 4 of Arabidopsis thaliana (Mouse-ear cress).